Reading from the N-terminus, the 575-residue chain is Sulfite reductase [NADPH] hemoprotein beta-component (575 aa).

[4Fe-4S] cluster-binding residues include Cys440, Cys446, Cys485, and Cys489. Cys489 serves as a coordination point for siroheme.

Belongs to the nitrite and sulfite reductase 4Fe-4S domain family. Alpha(8)-beta(8). The alpha component is a flavoprotein, the beta component is a hemoprotein. Siroheme is required as a cofactor. [4Fe-4S] cluster serves as cofactor.

It carries out the reaction hydrogen sulfide + 3 NADP(+) + 3 H2O = sulfite + 3 NADPH + 4 H(+). Its pathway is sulfur metabolism; hydrogen sulfide biosynthesis; hydrogen sulfide from sulfite (NADPH route): step 1/1. Its function is as follows. Component of the sulfite reductase complex that catalyzes the 6-electron reduction of sulfite to sulfide. This is one of several activities required for the biosynthesis of L-cysteine from sulfate. This Chromohalobacter salexigens (strain ATCC BAA-138 / DSM 3043 / CIP 106854 / NCIMB 13768 / 1H11) protein is Sulfite reductase [NADPH] hemoprotein beta-component.